The chain runs to 337 residues: AP2/ERF and B3 domain-containing transcription factor At1g50680 (337 aa).

A DNA-binding region (AP2/ERF) is located at residues 27–84 (KYKGVVQQQNGHWGAQIYADHKRIWLGTFKSADEAATAYDSASIKLRSFDANSHRNFP). A DNA-binding region (TF-B3) is located at residues 157-271 (FQKELTPSDV…VKTLEGQRKN (115 aa)).

This sequence belongs to the AP2/ERF transcription factor family. RAV subfamily.

The protein resides in the nucleus. Probably acts as a transcriptional activator. Binds to the GCC-box pathogenesis-related promoter element. May be involved in the regulation of gene expression by stress factors and by components of stress signal transduction pathways. The sequence is that of AP2/ERF and B3 domain-containing transcription factor At1g50680 from Arabidopsis thaliana (Mouse-ear cress).